The primary structure comprises 107 residues: Integration host factor subunit beta (107 aa).

The disordered stretch occupies residues 76–107; it reads FVPHFKPGKELRERVDGRAGEPLKADDPDDER. Residues 82-101 are compositionally biased toward basic and acidic residues; the sequence is PGKELRERVDGRAGEPLKAD.

Belongs to the bacterial histone-like protein family. In terms of assembly, heterodimer of an alpha and a beta chain.

Its function is as follows. This protein is one of the two subunits of integration host factor, a specific DNA-binding protein that functions in genetic recombination as well as in transcriptional and translational control. The chain is Integration host factor subunit beta from Burkholderia cenocepacia (strain ATCC BAA-245 / DSM 16553 / LMG 16656 / NCTC 13227 / J2315 / CF5610) (Burkholderia cepacia (strain J2315)).